Reading from the N-terminus, the 348-residue chain is Dihydroorotase (348 aa).

Zn(2+) is bound by residues His-17 and His-19. Substrate contacts are provided by residues 19–21 and Asn-45; that span reads HLR. Zn(2+) is bound by residues Lys-103, His-140, and His-178. Lys-103 bears the N6-carboxylysine mark. His-140 provides a ligand contact to substrate. Leu-223 serves as a coordination point for substrate. Position 251 (Asp-251) interacts with Zn(2+). Asp-251 is an active-site residue. Residues His-255 and Ala-267 each contribute to the substrate site.

Belongs to the metallo-dependent hydrolases superfamily. DHOase family. Class II DHOase subfamily. Homodimer. It depends on Zn(2+) as a cofactor.

It catalyses the reaction (S)-dihydroorotate + H2O = N-carbamoyl-L-aspartate + H(+). It functions in the pathway pyrimidine metabolism; UMP biosynthesis via de novo pathway; (S)-dihydroorotate from bicarbonate: step 3/3. Its function is as follows. Catalyzes the reversible cyclization of carbamoyl aspartate to dihydroorotate. This chain is Dihydroorotase, found in Shigella flexneri.